Here is a 491-residue protein sequence, read N- to C-terminus: Protein nucleotidyltransferase YdiU (491 aa).

The ATP site is built by Gly-94, Gly-96, Arg-97, Lys-117, Asp-129, Gly-130, Arg-180, and Arg-187. Asp-256 (proton acceptor) is an active-site residue. Mg(2+) contacts are provided by Asn-257 and Asp-266. Asp-266 is an ATP binding site.

Belongs to the SELO family. Mg(2+) is required as a cofactor. It depends on Mn(2+) as a cofactor.

The enzyme catalyses L-seryl-[protein] + ATP = 3-O-(5'-adenylyl)-L-seryl-[protein] + diphosphate. It catalyses the reaction L-threonyl-[protein] + ATP = 3-O-(5'-adenylyl)-L-threonyl-[protein] + diphosphate. The catalysed reaction is L-tyrosyl-[protein] + ATP = O-(5'-adenylyl)-L-tyrosyl-[protein] + diphosphate. It carries out the reaction L-histidyl-[protein] + UTP = N(tele)-(5'-uridylyl)-L-histidyl-[protein] + diphosphate. The enzyme catalyses L-seryl-[protein] + UTP = O-(5'-uridylyl)-L-seryl-[protein] + diphosphate. It catalyses the reaction L-tyrosyl-[protein] + UTP = O-(5'-uridylyl)-L-tyrosyl-[protein] + diphosphate. Functionally, nucleotidyltransferase involved in the post-translational modification of proteins. It can catalyze the addition of adenosine monophosphate (AMP) or uridine monophosphate (UMP) to a protein, resulting in modifications known as AMPylation and UMPylation. In Brevibacillus brevis (strain 47 / JCM 6285 / NBRC 100599), this protein is Protein nucleotidyltransferase YdiU.